The chain runs to 295 residues: MNNIIDGKALANEILEDLKLEIQELKSQTNASPKLAIVLVGDNPASIIYVKNKIKNAHKIGIDTLLVNLSTTIHTNDLITKINELNHDNEISGMIVQLPLPNSIDKNKILSAVSPYKDVDGFHPLNVGYLHSGIIDVSEFSQSFIPCTALGCLAVIKKYEPNLSGKHVVVIGRSNIVGKPLSALLLKEDCSVTICHSKTHNLGSIALKADIVVAAIGSPLKLTAEYFNPESIVIDVGINRISGNKIIGDVDFEHVKSKVKYITPVPGGIGPMTIAFLLKNTVKAFKDSYSTVCHL.

NADP(+)-binding positions include 172–174 (GRS), serine 197, and isoleucine 238.

It belongs to the tetrahydrofolate dehydrogenase/cyclohydrolase family. In terms of assembly, homodimer.

The enzyme catalyses (6R)-5,10-methylene-5,6,7,8-tetrahydrofolate + NADP(+) = (6R)-5,10-methenyltetrahydrofolate + NADPH. The catalysed reaction is (6R)-5,10-methenyltetrahydrofolate + H2O = (6R)-10-formyltetrahydrofolate + H(+). The protein operates within one-carbon metabolism; tetrahydrofolate interconversion. In terms of biological role, catalyzes the oxidation of 5,10-methylenetetrahydrofolate to 5,10-methenyltetrahydrofolate and then the hydrolysis of 5,10-methenyltetrahydrofolate to 10-formyltetrahydrofolate. This chain is Bifunctional protein FolD, found in Rickettsia akari (strain Hartford).